The following is a 59-amino-acid chain: MGKITIVNIDDCVACGACSGTCPQSVLEVNDHVEIKNPDDCIGCGACVDACPQGVLKVE.

2 4Fe-4S ferredoxin-type domains span residues glycine 2–asparagine 30 and aspartate 31–glutamate 59. Cysteine 12, cysteine 15, cysteine 18, cysteine 22, cysteine 41, cysteine 44, cysteine 47, and cysteine 51 together coordinate [4Fe-4S] cluster.

It depends on [4Fe-4S] cluster as a cofactor.

Ferredoxins are iron-sulfur proteins that transfer electrons in a wide variety of metabolic reactions. In Entamoeba histolytica (strain ATCC 30459 / HM-1:IMSS / ABRM), this protein is Ferredoxin.